The primary structure comprises 739 residues: MSTPHHQFESKSSTAIRRRLSSSVSSKQRPNIMTTTFASLTPMWAGVAGTLVNNNTQYEIAVTVHDGVYSTDFASVIIPVTPGDTVKNSKDIEAQVLNLIRKFSAEHLCKFLGAGITLALLKECPNLCTRLWLDMDIVPIVFNIKPFHTDSVTRPNIKHRISSTTGSYVPSGSETPTVYVEASHLDDPSHLSPNAAQKLPIPRTLDEQSDSAARKCLMYFGPNNNPRLSIGARNQVTVDAGGKIHLIDDLEEYRETVGAGTWNAVIKLADELREKKVKIGFFSSTPQGGGVALMRHALIRFLTALDVDVAWYVPNPSPQVFRTTKNNHNILQGVAAPDLRLTQEAKDAFDAWILKNGLRWTAEGGPLAPGGVDVVFIDDPQMPGLIPLIKKVRPEVPIVYRSHIEIRSDLVHVAGSPQEEVWKYLWNNIQLADLFISHPVSKFVPSDVPTEKLALLGAATDWLDGLNKDLDPWDSQFYMGEFRSPCAKEKMHELNWPARDYIVQVARFDPSKGIPNVVDSYYKFRNLLRTRSPDMDESEHPQLLICGHGAVDDPDASIIYDQIMALVNSDPYKEYAHDIVVMRLPPSDELLNAMMANSRIALQLSTREGFEVKVSEALHTGKPVIACRTGGIPLQIQHGKSGYLTTPGDNDAVAGHLYDLYTDEALYRKMSDFARTHVSDEVGTVGNAAAWLYLAVMYSRGEKIKPNGAWINDLLREETGEPYKEGETKLPRTKLDMQG.

Positions 1–26 (MSTPHHQFESKSSTAIRRRLSSSVSS) are excised as a propeptide. Residues 1 to 28 (MSTPHHQFESKSSTAIRRRLSSSVSSKQ) form a disordered region.

Belongs to the glycosyltransferase group 1 family. Glycosyltransferase 4 subfamily. As to quaternary structure, homodimer.

The catalysed reaction is alpha,alpha-trehalose + phosphate = alpha-D-glucose + alpha-D-glucose 1-phosphate. In terms of biological role, reversibly catalyzes the synthesis and degradation of trehalose from glucose and alpha-D-glucose 1-phosphate. The equilibrium lies in the direction of trehalose synthesis. This Pleurotus pulmonarius (Indian oyster mushroom) protein is Trehalose phosphorylase.